The sequence spans 351 residues: ATP-dependent protease ATP-binding subunit-like protein (351 aa).

Positions methionine 1 to valine 26 are disordered. Glycine 79–threonine 86 serves as a coordination point for ATP.

The protein belongs to the ClpA/ClpB family.

This Rhodococcus erythropolis (Arthrobacter picolinophilus) protein is ATP-dependent protease ATP-binding subunit-like protein.